We begin with the raw amino-acid sequence, 145 residues long: D-aminoacyl-tRNA deacylase (145 aa).

Positions 137-138 (GP) match the Gly-cisPro motif, important for rejection of L-amino acids motif.

This sequence belongs to the DTD family. Homodimer.

It is found in the cytoplasm. It carries out the reaction glycyl-tRNA(Ala) + H2O = tRNA(Ala) + glycine + H(+). It catalyses the reaction a D-aminoacyl-tRNA + H2O = a tRNA + a D-alpha-amino acid + H(+). An aminoacyl-tRNA editing enzyme that deacylates mischarged D-aminoacyl-tRNAs. Also deacylates mischarged glycyl-tRNA(Ala), protecting cells against glycine mischarging by AlaRS. Acts via tRNA-based rather than protein-based catalysis; rejects L-amino acids rather than detecting D-amino acids in the active site. By recycling D-aminoacyl-tRNA to D-amino acids and free tRNA molecules, this enzyme counteracts the toxicity associated with the formation of D-aminoacyl-tRNA entities in vivo and helps enforce protein L-homochirality. The polypeptide is D-aminoacyl-tRNA deacylase (Limosilactobacillus fermentum (strain NBRC 3956 / LMG 18251) (Lactobacillus fermentum)).